The chain runs to 513 residues: Maturase K (513 aa).

Belongs to the intron maturase 2 family. MatK subfamily.

Its subcellular location is the plastid. The protein resides in the chloroplast. Its function is as follows. Usually encoded in the trnK tRNA gene intron. Probably assists in splicing its own and other chloroplast group II introns. The chain is Maturase K from Cyrilla racemiflora (Swamp titi).